The chain runs to 159 residues: Endoribonuclease YbeY (159 aa).

Residues H119, H123, and H129 each coordinate Zn(2+).

It belongs to the endoribonuclease YbeY family. The cofactor is Zn(2+).

It is found in the cytoplasm. Single strand-specific metallo-endoribonuclease involved in late-stage 70S ribosome quality control and in maturation of the 3' terminus of the 16S rRNA. The sequence is that of Endoribonuclease YbeY from Acinetobacter baylyi (strain ATCC 33305 / BD413 / ADP1).